A 264-amino-acid chain; its full sequence is Thymidylate synthase (264 aa).

R21 contributes to the dUMP binding site. H51 lines the (6R)-5,10-methylene-5,6,7,8-tetrahydrofolate pocket. Residue R126 to R127 coordinates dUMP. The active-site Nucleophile is C146. DUMP-binding positions include R166–D169, N177, and H207–Y209. D169 serves as a coordination point for (6R)-5,10-methylene-5,6,7,8-tetrahydrofolate. S263 contributes to the (6R)-5,10-methylene-5,6,7,8-tetrahydrofolate binding site.

The protein belongs to the thymidylate synthase family. Bacterial-type ThyA subfamily. In terms of assembly, homodimer.

It is found in the cytoplasm. The catalysed reaction is dUMP + (6R)-5,10-methylene-5,6,7,8-tetrahydrofolate = 7,8-dihydrofolate + dTMP. The protein operates within pyrimidine metabolism; dTTP biosynthesis. Its function is as follows. Catalyzes the reductive methylation of 2'-deoxyuridine-5'-monophosphate (dUMP) to 2'-deoxythymidine-5'-monophosphate (dTMP) while utilizing 5,10-methylenetetrahydrofolate (mTHF) as the methyl donor and reductant in the reaction, yielding dihydrofolate (DHF) as a by-product. This enzymatic reaction provides an intracellular de novo source of dTMP, an essential precursor for DNA biosynthesis. The sequence is that of Thymidylate synthase from Buchnera aphidicola subsp. Acyrthosiphon pisum (strain 5A).